Reading from the N-terminus, the 907-residue chain is Lipoxygenase 1, chloroplastic (907 aa).

The N-terminal 49 residues, Met-1 to Val-49, are a transit peptide targeting the chloroplast. Residues Asp-85–Thr-209 enclose the PLAT domain. The region spanning Pro-212–Ile-907 is the Lipoxygenase domain. The Fe cation site is built by His-567, His-572, His-758, Asn-762, and Ile-907.

The protein belongs to the lipoxygenase family. It depends on Fe cation as a cofactor. Confined to glandular trichomes in flowers, and, at low levels, in leaves.

It localises to the plastid. Its subcellular location is the chloroplast. It catalyses the reaction (9Z,12Z,15Z)-octadecatrienoate + O2 = 13-hydroperoxy-(9Z,11E,15Z)-octadecatrienoate. It functions in the pathway lipid metabolism; oxylipin biosynthesis. The protein operates within isoprenoid biosynthesis. In terms of biological role, component of the monoterpenoid pyrethrins biosynthesis; pyrethrins are widely used plant-derived pesticide. Plant lipoxygenases may be involved in a number of diverse aspects of plant physiology including growth and development, pest resistance, and senescence or responses to wounding. Catalyzes the hydroperoxidation of lipids containing a cis,cis-1,4-pentadiene structure. Mediates the peroxidation of linolenic acid leading to the production of 13-hydroperoxylinolenic acid. In Tanacetum cinerariifolium (Dalmatian daisy), this protein is Lipoxygenase 1, chloroplastic.